The following is a 306-amino-acid chain: Phospho-N-acetylmuramoyl-pentapeptide-transferase (306 aa).

Helical transmembrane passes span M1 to P21, G49 to L69, L75 to V95, A104 to Q124, I130 to G150, G160 to S180, S182 to Y202, V209 to M229, L234 to V254, and I284 to L304.

It belongs to the glycosyltransferase 4 family. MraY subfamily. The cofactor is Mg(2+).

Its subcellular location is the cell inner membrane. It catalyses the reaction UDP-N-acetyl-alpha-D-muramoyl-L-alanyl-gamma-D-glutamyl-meso-2,6-diaminopimeloyl-D-alanyl-D-alanine + di-trans,octa-cis-undecaprenyl phosphate = di-trans,octa-cis-undecaprenyl diphospho-N-acetyl-alpha-D-muramoyl-L-alanyl-D-glutamyl-meso-2,6-diaminopimeloyl-D-alanyl-D-alanine + UMP. It functions in the pathway cell wall biogenesis; peptidoglycan biosynthesis. In terms of biological role, catalyzes the initial step of the lipid cycle reactions in the biosynthesis of the cell wall peptidoglycan: transfers peptidoglycan precursor phospho-MurNAc-pentapeptide from UDP-MurNAc-pentapeptide onto the lipid carrier undecaprenyl phosphate, yielding undecaprenyl-pyrophosphoryl-MurNAc-pentapeptide, known as lipid I. This is Phospho-N-acetylmuramoyl-pentapeptide-transferase from Fervidobacterium nodosum (strain ATCC 35602 / DSM 5306 / Rt17-B1).